The chain runs to 327 residues: Malate dehydrogenase (327 aa).

Residues Gly20–Gly25 and Asp44 each bind NAD(+). Substrate is bound by residues Arg93 and Arg99. NAD(+) contacts are provided by residues Asn106 and Val129–Asn131. Residues Asn131 and Arg162 each coordinate substrate. The Proton acceptor role is filled by His186.

It belongs to the LDH/MDH superfamily. MDH type 3 family.

The enzyme catalyses (S)-malate + NAD(+) = oxaloacetate + NADH + H(+). Its function is as follows. Catalyzes the reversible oxidation of malate to oxaloacetate. The protein is Malate dehydrogenase of Nostoc punctiforme (strain ATCC 29133 / PCC 73102).